Reading from the N-terminus, the 160-residue chain is Protransforming growth factor alpha (160 aa).

A signal peptide spans 1 to 23; the sequence is MVPSAGQLALFALGIVLAACQAL. Residues 24–39 constitute a propeptide, removed in mature form; that stretch reads ENSTSPLSADPPVAAA. Topologically, residues 24–98 are extracellular; it reads ENSTSPLSAD…AVVAASQKKQ (75 aa). An N-linked (GlcNAc...) asparagine glycan is attached at N25. Positions 43–83 constitute an EGF-like domain; sequence HFNDCPDSHTQFCFHGTCRFLVQEDKPACVCHSGYVGARCE. 3 disulfide bridges follow: C47–C60, C55–C71, and C73–C82. Residues 90 to 160 constitute a propeptide, removed in mature form; that stretch reads VVAASQKKQA…TACCHSETVV (71 aa). The chain crosses the membrane as a helical span at residues 99–124; it reads AITALVVVSIVALAVLIITCVLIHCC. At 125–160 the chain is on the cytoplasmic side; the sequence is QVRKHCEWCRALICRHEKPSALLKGRTACCHSETVV. 2 S-palmitoyl cysteine lipidation sites follow: C153 and C154.

In terms of assembly, interacts with the PDZ domains of MAGI3, SDCBP and SNTA1. The interaction with SDCBP, is required for the targeting to the cell surface. In the endoplasmic reticulum, in its immature form (i.e. with a prosegment and lacking full N-glycosylation), interacts with CNIH. In the Golgi apparatus, may form a complex with CNIH and GORASP2. Interacts (via cytoplasmic C-terminal domain) with NKD2. Isoform 1, isoform 3 and isoform 4 are expressed in keratinocytes and tumor-derived cell lines.

The protein resides in the secreted. It is found in the extracellular space. Its subcellular location is the cell membrane. In terms of biological role, TGF alpha is a mitogenic polypeptide that is able to bind to the EGF receptor/EGFR and to act synergistically with TGF beta to promote anchorage-independent cell proliferation in soft agar. The sequence is that of Protransforming growth factor alpha (TGFA) from Homo sapiens (Human).